The chain runs to 447 residues: MKRKRAIIQHILSEKRRIEKIKEGDSMAGKDDFGTTKYIIYAEFEANGVVERPDVVGAIFGQTEGLLGDDLDLRELQKTGRIGRIKVEVHTKAGKSYGTILVPSSLDRVETAIIAAALETIDRVGPCEAKIRVVKIEDVRASKRKYIIERAKEILETLIEEEIPETQELVEEVRKAVREMELIEYGPEKLPAGPHVPFSDSIIVVEGRADVLNLLRHGIKNAIAVEGTSIPETIIKLSKERIVTAFTDGDRGGELILKELLQVADIDYVARAPEGKEVEELTKKEIIKALRSKVPAEEVYNELFNKGKSFYEIVKEREGKVKEEKPEKEVQQPKPQVKANEKIVKPLPVPKQDYRGFEEFVERVKNSQDPIALLLDENKNVIAEVHTRDLLSAIDENDGVYAVIFNGIITQRLIDVVSEKGVRYLIGAKKANVVRRPVTLKVITFAE.

Positions 200 to 274 (DSIIVVEGRA…DIDYVARAPE (75 aa)) constitute a Toprim domain. Mg(2+) is bound by residues glutamate 206, aspartate 248, and aspartate 250.

It belongs to the archaeal DnaG primase family. In terms of assembly, forms a ternary complex with MCM helicase and DNA. Component of the archaeal exosome complex. Mg(2+) is required as a cofactor.

The enzyme catalyses ssDNA + n NTP = ssDNA/pppN(pN)n-1 hybrid + (n-1) diphosphate.. In terms of biological role, RNA polymerase that catalyzes the synthesis of short RNA molecules used as primers for DNA polymerase during DNA replication. Also part of the exosome, which is a complex involved in RNA degradation. Acts as a poly(A)-binding protein that enhances the interaction between heteromeric, adenine-rich transcripts and the exosome. The polypeptide is DNA primase DnaG (Pyrococcus abyssi (strain GE5 / Orsay)).